The following is a 400-amino-acid chain: Acetate kinase (400 aa).

Asn10 is a Mg(2+) binding site. Lys17 is an ATP binding site. Arg89 is a substrate binding site. The active-site Proton donor/acceptor is the Asp148. ATP-binding positions include 208-212 (HLGNG), 283-285 (DCR), and 331-335 (GIGEN). Glu385 is a Mg(2+) binding site.

It belongs to the acetokinase family. Homodimer. It depends on Mg(2+) as a cofactor. The cofactor is Mn(2+).

It localises to the cytoplasm. It catalyses the reaction acetate + ATP = acetyl phosphate + ADP. The protein operates within metabolic intermediate biosynthesis; acetyl-CoA biosynthesis; acetyl-CoA from acetate: step 1/2. In terms of biological role, catalyzes the formation of acetyl phosphate from acetate and ATP. Can also catalyze the reverse reaction. The sequence is that of Acetate kinase from Haemophilus ducreyi (strain 35000HP / ATCC 700724).